The sequence spans 410 residues: MTRIAYLDCPTGISGDMCLGALLDGGVPLDYLQHHLQGLGIAEEFSLSWHKVEHQGQQASKAEVQLRAHGHHHHPPARHWPDIVALIQQAGLPLRAEAWSLAIFRELALAEAAVHGVAAEQVHFHEVGATDALVDIVGTCLGLDWLGIEELYCSALPTGGGTVKAAHGRLPVPVPAVLQLWQKFHVPVYSNGIERELVTPTGAAIAVTLASQFGPPPPLQLEKIGLGAGTQELPLANILRLWIGQKATQAAVPQGQDGSDRVEEIILLETQIDDLNPQAIGYTMEALFAAGAVDVFTQAIGMKKSRPGVLLSVVCTAETVESCETVLFRETTTLGIRRSQQQRRILARQIQTLDTRYGPIRLKIAYQQGKIVNVQPEFEDCAQVAKQQDLPWQQIHQLALSTWYQHQPSP.

Belongs to the LarC family.

The protein is Putative nickel insertion protein of Cyanothece sp. (strain PCC 7425 / ATCC 29141).